A 244-amino-acid chain; its full sequence is MEDLNFEERGSTQIPASLQQHFSAKLGRQNELEKTPSRGGLGLVVNSSKTPGGKSLQSLASACKVPPSTKKNTIPIAFECYEDETDDQIADVATIKKTEKHPCSPIDTANRCETFDSLAADIEDDMLNLEDQDVVLSEDRPYGDVIDPAESEAEALAELGVEEWDSYPPIDPASRIGDDFNYVLRTEDFAEEGDVKLEETRHRTVIADIDEVKMSKAERNELFSMLADDLDSYDLLAEEANLPL.

Residues 31-53 (ELEKTPSRGGLGLVVNSSKTPGG) are disordered.

Forms a complex (via C-terminus) with separase sep-1. Interaction with ify-1 stabilizes sep-1. Also maintains the complex in the cytoplasm during interphase and recruits it to chromosomes during the first meiotic division. Interacts with E3 ubiquitin-protein ligase etc-1. In terms of processing, ubiquitinated by etc-1 likely at the onset of anaphase, resulting in its degradation. In terms of tissue distribution, expressed in germ cells including oocytes.

Its subcellular location is the cytoplasm. It localises to the chromosome. It is found in the cytoskeleton. The protein localises to the spindle. Functionally, acts as a chaperone and as an inhibitor for separase sep-1. Plays an essential role in maintaining chromosome cohesion prior to meiotic and mitotic anaphase, in cytokinesis and in organizing the spindle and the centrosome. Ubiquitination-dependent degradation at the onset of anaphase is likely to activate sep-1 resulting in the proteolysis of the cohesin complex and the subsequent segregation of the chromosomes. Also required for cortical granule exocytosis. This is Securin-like protein from Caenorhabditis elegans.